The following is a 240-amino-acid chain: Molybdate/tungstate import ATP-binding protein WtpC (240 aa).

The 226-residue stretch at 2–227 folds into the ABC transporter domain; it reads FLKVRAEKRL…KNGEVAEFLS (226 aa). Position 31 to 38 (31 to 38) interacts with ATP; that stretch reads GPTGAGKS.

Belongs to the ABC transporter superfamily. Sulfate/tungstate importer (TC 3.A.1.6) family. The complex is composed of two ATP-binding proteins (WtpC), two transmembrane proteins (WtpB) and a solute-binding protein (WtpA).

Its subcellular location is the cell membrane. The catalysed reaction is tungstate(in) + ATP + H2O = tungstate(out) + ADP + phosphate + H(+). Functionally, part of the ABC transporter complex WtpABC involved in molybdate/tungstate import. Responsible for energy coupling to the transport system. This chain is Molybdate/tungstate import ATP-binding protein WtpC (wtpC), found in Archaeoglobus fulgidus (strain ATCC 49558 / DSM 4304 / JCM 9628 / NBRC 100126 / VC-16).